We begin with the raw amino-acid sequence, 147 residues long: Nucleoside diphosphate kinase (147 aa).

Lys-11, Phe-59, Arg-87, Thr-93, Arg-104, and Asn-114 together coordinate ATP. His-117 acts as the Pros-phosphohistidine intermediate in catalysis.

The protein belongs to the NDK family. As to quaternary structure, homotetramer. The cofactor is Mg(2+).

The protein resides in the cytoplasm. The catalysed reaction is a 2'-deoxyribonucleoside 5'-diphosphate + ATP = a 2'-deoxyribonucleoside 5'-triphosphate + ADP. It carries out the reaction a ribonucleoside 5'-diphosphate + ATP = a ribonucleoside 5'-triphosphate + ADP. In terms of biological role, major role in the synthesis of nucleoside triphosphates other than ATP. The ATP gamma phosphate is transferred to the NDP beta phosphate via a ping-pong mechanism, using a phosphorylated active-site intermediate. The sequence is that of Nucleoside diphosphate kinase from Anaeromyxobacter dehalogenans (strain 2CP-1 / ATCC BAA-258).